The sequence spans 152 residues: Deoxyuridine 5'-triphosphate nucleotidohydrolase (152 aa).

Substrate contacts are provided by residues 70 to 72 (RSG), Asn83, 87 to 89 (LID), and Met97.

This sequence belongs to the dUTPase family. Mg(2+) serves as cofactor.

The enzyme catalyses dUTP + H2O = dUMP + diphosphate + H(+). Its pathway is pyrimidine metabolism; dUMP biosynthesis; dUMP from dCTP (dUTP route): step 2/2. Its function is as follows. This enzyme is involved in nucleotide metabolism: it produces dUMP, the immediate precursor of thymidine nucleotides and it decreases the intracellular concentration of dUTP so that uracil cannot be incorporated into DNA. The chain is Deoxyuridine 5'-triphosphate nucleotidohydrolase from Buchnera aphidicola subsp. Baizongia pistaciae (strain Bp).